Consider the following 1228-residue polypeptide: Clustered mitochondria protein homolog (1228 aa).

One can recognise a Clu domain in the interval 298–557 (PSSLPSNSID…DNNPLDVGFA (260 aa)). One copy of the TPR 1 repeat lies at 486–519 (CYGFDEASNKVIADAEFGSSLDDFAKVFHLKKHE). The stretch at 671-702 (LGRVIELAEQELEAQRALREAHLQQVEADNKE) forms a coiled coil. TPR repeat units lie at residues 982 to 1015 (AESY…YERV) and 1108 to 1141 (AVNE…FSKE).

The protein belongs to the CLU family. As to quaternary structure, may associate with the eukaryotic translation initiation factor 3 (eIF-3) complex.

It localises to the cytoplasm. Functionally, mRNA-binding protein involved in proper cytoplasmic distribution of mitochondria. This is Clustered mitochondria protein homolog from Eremothecium gossypii (strain ATCC 10895 / CBS 109.51 / FGSC 9923 / NRRL Y-1056) (Yeast).